The sequence spans 377 residues: Mechanosensory abnormality protein 6 (377 aa).

Residues M1 to R13 are Cytoplasmic-facing. Residues F14 to L34 form a helical membrane-spanning segment. The Extracellular portion of the chain corresponds to D35–T377. Cysteines 48 and 369 form a disulfide. The N-linked (GlcNAc...) asparagine glycan is linked to N94.

Belongs to the paraoxonase family. As to quaternary structure, component of a non-voltage-gated amiloride-sensitive cation channel complex (also called the degenerin channel complex) composed of at least the mec-2, mec-4, mec-6 and mec-10 subunits; the complex mediates mechanotransduction in touch cells. Interacts with mec-2, mec-4 and mec-10. Post-translationally, glycosylated. As to expression, expressed in neurons including the six touch receptors, ventral cord motor neurons, HSN, PVD, PVC, IL1, and several neurons near the nerve ring, in the anal ganglion and in the male tail sensory rays, in muscles including the body wall, vulval, intestinal, anal depressor and sphincter muscles, and in the excretory canal.

It localises to the cell membrane. The protein resides in the cell projection. Its subcellular location is the axon. Functionally, subunit of an amiloride-sensitive cation channel (degenerin channel complex) permeable for sodium, potassium, lithium and N-methylglucamine, and required for mechanosensory transduction (touch sensitivity). Interacts with degenerin channel proteins and stabilizes the channel. Plays a role in mechanosensory transduction (touch sensitivity). The chain is Mechanosensory abnormality protein 6 from Caenorhabditis elegans.